The sequence spans 1716 residues: Histone-lysine N-methyltransferase SETD1A (1716 aa).

Residues 60 to 89 are interaction with WDR82; the sequence is LQDPRCHVRSKARDFSLPVPKFKLDEFYIG. The RRM domain occupies 84 to 172; sequence DEFYIGQIPL…NIIHAQLDIK (89 aa). 7 disordered regions span residues 194–367, 380–499, 516–670, 849–869, 911–1206, 1230–1259, and 1275–1297; these read PTGG…SSYP, TSYP…AQHS, FSFL…PPPH, AKPFQNAAKQQAKEEDKEKMK, KRKE…SRKV, EEVARGGRNRAGGRVRSTEEEEATESGTEV, and GLATLPTGDDSEATETSDEAERP. Residues 222–231 show a composition bias toward low complexity; the sequence is SDTAAYPAGT. Residues 243-277 are compositionally biased toward polar residues; that stretch reads CSQDTNFSSSRQDTPSSFGQFTPQSSQGTPYTSRG. Low complexity-rich tracts occupy residues 278 to 295 and 315 to 357; these read STPYSQDSAYSSSTTSTS and STSS…SSAS. A compositionally biased stretch (pro residues) spans 430–440; sequence SEAPPPEPPEP. Residues 441 to 461 are compositionally biased toward gly residues; it reads GGGGGGSGGGGGGGGGGGGGA. Position 477 is a phosphoserine (S477). A compositionally biased stretch (low complexity) spans 477–487; sequence SPARSGSPAPE. A compositionally biased stretch (polar residues) spans 488–499; it reads TTNESVPFAQHS. Phosphoserine is present on residues S521 and S578. Polar residues predominate over residues 581-591; it reads ANGQNQASPCS. Composition is skewed to pro residues over residues 606–631 and 638–670; these read SPPPAPTPPQQPPPPPPPPPPPPPPY and GYPPHQPAYLLPPRPDGPPPPEYPPPPPPPPPH. Positions 859-869 are enriched in basic and acidic residues; it reads QAKEEDKEKMK. Residue S930 is modified to Phosphoserine. Acidic residues-rich tracts occupy residues 991-1009 and 1018-1027; these read KDEDDDDEDEEDEEQEEAV and ASDGEDEDSD. Low complexity predominate over residues 1028 to 1071; sequence SSSQCSLYADSDGENGSTSDSESGSSSSSSSSSSSSSSSSSSES. S1110 is modified (phosphoserine). Over residues 1130-1150 the composition is skewed to pro residues; that stretch reads EEPPPSVPQPPAEPPAGPPDA. Residues 1283-1292 are compositionally biased toward acidic residues; it reads DDSEATETSD. An HCFC1-binding motif (HBM) motif is present at residues 1307 to 1311; the sequence is EHNYA. 2 disordered regions span residues 1355–1427 and 1480–1508; these read EEPK…FEPR and TNLSTPKRKRRPQDGPREHQTGSARSEGY. The span at 1369 to 1383 shows a compositional bias: acidic residues; sequence EGEEEEEDEEEESES. The span at 1399–1412 shows a compositional bias: basic residues; it reads RRRSLRSHTRRRRP. Residues 1413–1424 show a composition bias toward pro residues; the sequence is PLPPPPPPPPSF. The interval 1424–1459 is interaction with CFP1; that stretch reads FEPRSEFEQMTILYDIWNSGLDLEDMSYLRLTYERL. An interaction with ASH2L, RBBP5 and WDR5 region spans residues 1459 to 1546; it reads LLQQTSGADW…GTNRVLSERR (88 aa). A WDR5 interaction motif (WIN) motif is present at residues 1501–1506; sequence GSARSE. The short motif at 1546 to 1551 is the RxxxRR motif element; sequence RSEQRR. The SET domain maps to 1577–1694; the sequence is KKLRFGRSRI…VDEEITYDYK (118 aa). Y1693 provides a ligand contact to S-adenosyl-L-methionine. In terms of domain architecture, Post-SET spans 1700 to 1716; that stretch reads NKIPCLCGTESCRGSLN.

It belongs to the class V-like SAM-binding methyltransferase superfamily. As to quaternary structure, component of the SET1A/COMPASS complex composed of the catalytic subunit SETD1A, WDR5, WDR82, RBBP5, ASH2L/ASH2, CXXC1/CFP1, HCFC1 and DPY30 homotrimer. Forms a core complex with the evolutionary conserved subcomplex WRAD composed of WDR5, RBBP5, ASH2L/ASH2 and DPY30 subunits; WRAD differentially stimulates the methyltransferase activity. Interacts with BOD1L1 (via COMPASS-Shg1 domain) at replication forks. Interacts with HCFC1. Interacts with ASH2/ASH2L. Interacts with CXXC1/CFP1. Interacts with RBBP5. Interacts (via N-terminal region) with WDR82; the interaction is direct. Interacts (via the RRM domain) with hyperphosphorylated C-terminal domain (CTD) of RNA polymerase II large subunit (POLR2A) only in the presence of WDR82. Binds specifically to CTD heptad repeats phosphorylated on 'Ser-5' of each heptad. Interacts with ZNF335. Interacts with SUPT6H. Interacts with NAP1L1. Interacts (via WIN motif) with WDR5.

Its subcellular location is the nucleus. The protein resides in the nucleus speckle. The protein localises to the chromosome. It is found in the cytoplasm. The catalysed reaction is L-lysyl(4)-[histone H3] + S-adenosyl-L-methionine = N(6)-methyl-L-lysyl(4)-[histone H3] + S-adenosyl-L-homocysteine + H(+). It carries out the reaction N(6)-methyl-L-lysyl(4)-[histone H3] + S-adenosyl-L-methionine = N(6),N(6)-dimethyl-L-lysyl(4)-[histone H3] + S-adenosyl-L-homocysteine + H(+). It catalyses the reaction N(6),N(6)-dimethyl-L-lysyl(4)-[histone H3] + S-adenosyl-L-methionine = N(6),N(6),N(6)-trimethyl-L-lysyl(4)-[histone H3] + S-adenosyl-L-homocysteine + H(+). Functionally, histone methyltransferase that catalyzes methyl group transfer from S-adenosyl-L-methionine to the epsilon-amino group of 'Lys-4' of histone H3 (H3K4) via a non-processive mechanism. Part of chromatin remodeling machinery, forms H3K4me1, H3K4me2 and H3K4me3 methylation marks at active chromatin sites where transcription and DNA repair take place. Responsible for H3K4me3 enriched promoters and transcriptional programming of inner mass stem cells and neuron progenitors during embryogenesis. Required for H3K4me1 mark at stalled replication forks. Mediates FANCD2-dependent nucleosome remodeling and RAD51 nucleofilaments stabilization at reversed forks, protecting them from nucleolytic degradation. Does not methylate 'Lys-4' of histone H3 if the neighboring 'Lys-9' residue is already methylated. Has RNA binding activity towards transcripts involved in RNA processing and the DNA damage response. In Mus musculus (Mouse), this protein is Histone-lysine N-methyltransferase SETD1A (Setd1a).